A 68-amino-acid polypeptide reads, in one-letter code: UPF0291 protein TTE2340 (68 aa).

The protein belongs to the UPF0291 family.

It is found in the cytoplasm. This is UPF0291 protein TTE2340 from Caldanaerobacter subterraneus subsp. tengcongensis (strain DSM 15242 / JCM 11007 / NBRC 100824 / MB4) (Thermoanaerobacter tengcongensis).